The primary structure comprises 59 residues: Large ribosomal subunit protein bL32 (59 aa).

Residues 1 to 22 (MAVPKKKTSNSKRDSRRAHWNR) are compositionally biased toward basic residues. The segment at 1–59 (MAVPKKKTSNSKRDSRRAHWNRKANLAAQRALSTGKSILTGRAKGFEYPTKDDDEDDDE) is disordered.

Belongs to the bacterial ribosomal protein bL32 family.

The polypeptide is Large ribosomal subunit protein bL32 (Acaryochloris marina (strain MBIC 11017)).